Reading from the N-terminus, the 266-residue chain is 3-methyl-2-oxobutanoate hydroxymethyltransferase (266 aa).

Residues Asp45 and Asp84 each coordinate Mg(2+). 3-methyl-2-oxobutanoate-binding positions include 45-46, Asp84, and Lys113; that span reads DS. Glu115 is a binding site for Mg(2+). Glu183 functions as the Proton acceptor in the catalytic mechanism.

The protein belongs to the PanB family. As to quaternary structure, homodecamer; pentamer of dimers. The cofactor is Mg(2+).

The protein resides in the cytoplasm. It catalyses the reaction 3-methyl-2-oxobutanoate + (6R)-5,10-methylene-5,6,7,8-tetrahydrofolate + H2O = 2-dehydropantoate + (6S)-5,6,7,8-tetrahydrofolate. It participates in cofactor biosynthesis; (R)-pantothenate biosynthesis; (R)-pantoate from 3-methyl-2-oxobutanoate: step 1/2. Functionally, catalyzes the reversible reaction in which hydroxymethyl group from 5,10-methylenetetrahydrofolate is transferred onto alpha-ketoisovalerate to form ketopantoate. The sequence is that of 3-methyl-2-oxobutanoate hydroxymethyltransferase from Coxiella burnetii (strain CbuK_Q154) (Coxiella burnetii (strain Q154)).